A 71-amino-acid polypeptide reads, in one-letter code: Sec-independent protein translocase protein TatA (71 aa).

The helical transmembrane segment at 9 to 29 threads the bilayer; the sequence is LLLILAIVVILFGASRLPALG. The segment at 43-71 is disordered; it reads FGGEDEKPTASGNGSTPTQSSSDQGSKQA. The segment covering 52-71 has biased composition (polar residues); it reads ASGNGSTPTQSSSDQGSKQA.

It belongs to the TatA/E family. The Tat system comprises two distinct complexes: a TatABC complex, containing multiple copies of TatA, TatB and TatC subunits, and a separate TatA complex, containing only TatA subunits. Substrates initially bind to the TatABC complex, which probably triggers association of the separate TatA complex to form the active translocon.

It localises to the cell inner membrane. Functionally, part of the twin-arginine translocation (Tat) system that transports large folded proteins containing a characteristic twin-arginine motif in their signal peptide across membranes. TatA could form the protein-conducting channel of the Tat system. The protein is Sec-independent protein translocase protein TatA of Anaeromyxobacter dehalogenans (strain 2CP-C).